The following is a 301-amino-acid chain: PWI domain-containing protein C825.05c (301 aa).

Positions 26–137 (STKFPASYDT…YGIPEKFILE (112 aa)) constitute a PWI domain. Ser-86 bears the Phosphoserine mark. Basic and acidic residues-rich tracts occupy residues 145–182 (LKDR…ERNG), 189–205 (TLDR…ERNR), and 215–229 (RFSE…DIRS). The disordered stretch occupies residues 145-301 (LKDRTEASKE…ESDSGTQKHD (157 aa)). Residue Ser-199 is modified to Phosphoserine. Positions 244–253 (PTRRRERHYR) are enriched in basic residues. Positions 254–289 (TRDDEGFDEFGRSRDGRWRESRTSYREKHRYDRDAL) are enriched in basic and acidic residues. A compositionally biased stretch (polar residues) spans 290–301 (SSESDSGTQKHD). At Ser-291 the chain carries Phosphoserine.

The protein resides in the nucleus. This Schizosaccharomyces pombe (strain 972 / ATCC 24843) (Fission yeast) protein is PWI domain-containing protein C825.05c.